The primary structure comprises 360 residues: Phospho-N-acetylmuramoyl-pentapeptide-transferase (360 aa).

Topologically, residues 1–25 (MLVWLAEHLVKYYSGFNVFSYLTFR) are periplasmic. Residues 26 to 46 (AIVSLLTALFISLWMGPRMIA) traverse the membrane as a helical segment. Residues 47-71 (RLQKLSFGQVVRNDGPESHFSKRGT) are Cytoplasmic-facing. The chain crosses the membrane as a helical span at residues 72 to 92 (PTMGGIMILTAIVISVLLWAY). Position 93 (Pro-93) is a topological domain, periplasmic. The chain crosses the membrane as a helical span at residues 94 to 114 (SNPYVWCVLVVLIGYGIIGFV). The Cytoplasmic portion of the chain corresponds to 115-131 (DDYRKVVRKDTKGLIAR). The helical transmembrane segment at 132-152 (WKYFWMSVIALGVAFALYLVG) threads the bilayer. Over 153-167 (KDTPVTQLVVPFFKD) the chain is Periplasmic. Residues 168 to 188 (VMPQLGLFYILLSYFVIVGTG) form a helical membrane-spanning segment. The Cytoplasmic segment spans residues 189 to 198 (NAVNLTDGLD). A helical transmembrane segment spans residues 199–219 (GLAIMPTVFVAAGFALVAWAT). Residues 220-235 (GNMNFANYLHIPYLRH) lie on the Periplasmic side of the membrane. The helical transmembrane segment at 236–256 (AGELVIVCTAIVGAGLGFLWF) threads the bilayer. Residues 257-262 (NTYPAQ) lie on the Cytoplasmic side of the membrane. The chain crosses the membrane as a helical span at residues 263–283 (VFMGDVGSLALGGALGIIAVL). Over 284-287 (LRQE) the chain is Periplasmic. The helical transmembrane segment at 288–308 (FLLVIMGGVFVVETLSVILQV) threads the bilayer. At 309 to 337 (GSFKLRGQRIFRMAPIHHHYELKGWPEPR) the chain is on the cytoplasmic side. The helical transmembrane segment at 338–358 (VIVRFWIISLMLVLIGLATLK) threads the bilayer. Topologically, residues 359–360 (VR) are periplasmic.

It belongs to the glycosyltransferase 4 family. MraY subfamily. The cofactor is Mg(2+).

Its subcellular location is the cell inner membrane. The catalysed reaction is UDP-N-acetyl-alpha-D-muramoyl-L-alanyl-gamma-D-glutamyl-meso-2,6-diaminopimeloyl-D-alanyl-D-alanine + di-trans,octa-cis-undecaprenyl phosphate = di-trans,octa-cis-undecaprenyl diphospho-N-acetyl-alpha-D-muramoyl-L-alanyl-D-glutamyl-meso-2,6-diaminopimeloyl-D-alanyl-D-alanine + UMP. It participates in cell wall biogenesis; peptidoglycan biosynthesis. Catalyzes the initial step of the lipid cycle reactions in the biosynthesis of the cell wall peptidoglycan: transfers peptidoglycan precursor phospho-MurNAc-pentapeptide from UDP-MurNAc-pentapeptide onto the lipid carrier undecaprenyl phosphate, yielding undecaprenyl-pyrophosphoryl-MurNAc-pentapeptide, known as lipid I. This chain is Phospho-N-acetylmuramoyl-pentapeptide-transferase, found in Salmonella paratyphi C (strain RKS4594).